The primary structure comprises 198 residues: Ribonuclease HII (198 aa).

In terms of domain architecture, RNase H type-2 spans 10 to 198; that stretch reads HLVAGVDEVG…PVKRALGLVC (189 aa). 3 residues coordinate a divalent metal cation: Asp-16, Glu-17, and Asp-108.

It belongs to the RNase HII family. Mn(2+) serves as cofactor. Requires Mg(2+) as cofactor.

Its subcellular location is the cytoplasm. The catalysed reaction is Endonucleolytic cleavage to 5'-phosphomonoester.. Functionally, endonuclease that specifically degrades the RNA of RNA-DNA hybrids. This is Ribonuclease HII from Enterobacter sp. (strain 638).